The chain runs to 187 residues: Elongation factor P (187 aa).

The protein belongs to the elongation factor P family.

It localises to the cytoplasm. Its pathway is protein biosynthesis; polypeptide chain elongation. Involved in peptide bond synthesis. Stimulates efficient translation and peptide-bond synthesis on native or reconstituted 70S ribosomes in vitro. Probably functions indirectly by altering the affinity of the ribosome for aminoacyl-tRNA, thus increasing their reactivity as acceptors for peptidyl transferase. This is Elongation factor P from Mycobacterium marinum (strain ATCC BAA-535 / M).